The chain runs to 274 residues: Type III pantothenate kinase (274 aa).

Position 6–13 (6–13 (DVRNTHTV)) interacts with ATP. 109–112 (GADR) is a substrate binding site. The active-site Proton acceptor is aspartate 111. Aspartate 131 contributes to the K(+) binding site. Serine 134 lines the ATP pocket. A substrate-binding site is contributed by threonine 186.

The protein belongs to the type III pantothenate kinase family. Homodimer. The cofactor is NH4(+). It depends on K(+) as a cofactor.

The protein localises to the cytoplasm. It carries out the reaction (R)-pantothenate + ATP = (R)-4'-phosphopantothenate + ADP + H(+). It participates in cofactor biosynthesis; coenzyme A biosynthesis; CoA from (R)-pantothenate: step 1/5. Catalyzes the phosphorylation of pantothenate (Pan), the first step in CoA biosynthesis. The polypeptide is Type III pantothenate kinase (Mycobacterium leprae (strain Br4923)).